The primary structure comprises 283 residues: Bifunctional protein FolD 2 (283 aa).

NADP(+) contacts are provided by residues 165 to 167 (GRG), threonine 192, and valine 233.

Belongs to the tetrahydrofolate dehydrogenase/cyclohydrolase family. Homodimer.

The catalysed reaction is (6R)-5,10-methylene-5,6,7,8-tetrahydrofolate + NADP(+) = (6R)-5,10-methenyltetrahydrofolate + NADPH. It catalyses the reaction (6R)-5,10-methenyltetrahydrofolate + H2O = (6R)-10-formyltetrahydrofolate + H(+). It functions in the pathway one-carbon metabolism; tetrahydrofolate interconversion. Functionally, catalyzes the oxidation of 5,10-methylenetetrahydrofolate to 5,10-methenyltetrahydrofolate and then the hydrolysis of 5,10-methenyltetrahydrofolate to 10-formyltetrahydrofolate. This Saccharopolyspora erythraea (strain ATCC 11635 / DSM 40517 / JCM 4748 / NBRC 13426 / NCIMB 8594 / NRRL 2338) protein is Bifunctional protein FolD 2.